Reading from the N-terminus, the 2274-residue chain is MGVPKRKASEGPSSAASPAGTVKRTRAEEFTGVRFKTLLKDAQGPGPALEAFVSAAKKLPQEDMCDVVEGYIKISMECAEIFQLLSGEKRPESEMLLIFQAFEAILLRTASDLTHFHVVGANIVKKLLYNHMKLLCESLYASGYRMARACLDLMTAMVTQGPEAARDVCSSLDLNKKALFALVTKRDSKGVHDVRLAYIQFALSFLIAGDDNTIGQVLEIKEFIPCIFSSGIKEDKISTINILLSTLKTKVIHNKNITKTQKVRFFTGQFLNHIAALYNWNGITDVTPEKPEISAEEAGKAMVRDLVHNFLMDLCCSRKHGISFYDASLGTSGRGGNLTLLHFLLSLKTAAGDDLVASLVVSILKVCPDLLTKYFKEVTFSFLPRVKSTWLNNVKLLNKIYEAQPEISPAFWTREFIPLPRLLAMVMVTTVPLVCNKIMFTQALNLDSIPVKHSALSLISDILKRALKTVDHCLDKETWQDSDVYTAEMMEEFVQLFREALGKILPDLNTVIWVWQSFKKQEIKEDHEKGKKSSSKTPAVSKAAQHDVAETILLKSVLLQVICLYQQVVPHVIMQYNFDFSKLLKGIISEQGPSQEVPPILQHHMLKVALELPANKFLWLKAQEGPEAEIIGGERSVFYLLMKMFVNSNHLQLKSSTKLLIMKILRDTGVFEHTWRELELWLEHLDSTAEERKEAVIQFLERILLTLVMNPYSYTDKASEFVQEASTLQASMGKQDADDVSIPISHIDDVLDMVDVLVEGSEGLDEDIGFLLNEDMILLTFPFSALVPAALEARNKLLLGTDCEAGESIMAYMTAVLTDLLHTQRDPLALCLLLQSYDKFEPVSLLCGQQLAQFHRYYSLWIPAQAQEALPLQVSSSSGPCTLPPSSCFSTLLQTAYESQTLGDKSVQAQLLAAVPSLALQHMLRSAKQVLLYLKSTVENFSQLGRSVGPALLQSLLGLLKQLVIHAERLDAQNQQKLEAARAESDLFLDMESVASLELATDKTIEELLLAILKHPTLETWFLALEQKALPPHTLSPILVKLLAAHFSAGVLQLLVASSPILHKLGQLGLLAKYSEAITQSVLIELRTRTLNSTSTPKTLPQLEALRELHPYMEGVQIREVTLALLALPEAHLLTQQGTQSLGKERHLSSLGKTLVQLLASSHQDQLQSSELLWCAEYVRGLGALLPTLAEHELDTVFLQTLQKDPVLAPVVPEGVLEYCLARRTQTALGIASLLLQYSGTHLVKFELWCGQPGVGPTLQEHLDDFFPLIHVYLQHRAQGSFMRPTGVSSAVTPVLKALWRQVRDRFFHITGPSKDALHLEALAQLIPFARTKDLHVLMDHLPNTLRTLSNHKSWTLADSVSAALAESAEELGSWRKTLLRSCIQWLAVSFSGREPEDENTQEHEKAMLVRLSELLHAVKEVDPGDWQQFVKTGLKFRYHDLTFLKTLLSATKLLYGPESSGRTKLVQLSVVHMMLTQHSLFLPTMLSSEEEETPDSGVKETLLDLMSTVVRLCPSVCQSSHFAVLLGTYSATLSVLDQKILLLLRAYEQNNLSLISFRVLLWGPAAVEHHKTCRSLGKSLWQQPSVGDILRLLDPDRMMQTILHFPQYRKLLPTEDTGEPLVFKDKTARVDLDSLYDPCFLLHLFGELTRPEFVVDCRKFLDSNALGLTVAALSSYDPQMRAAAYYVLAAYYSHLEGARFREQSQVLYLLDVVRNGIRTPNLRLPFTVALFIAKAAVQILKPEEHMYWKISKFLLSHENLNMDKLPGFYQFFYSSDFQQKTEQEWVLEILRQGIRDKHCYELCSRRGVFHIILSFFNSPLCDEVAQNWILEILQNVAHITRSAYEVIRDYSLLTWVLHILESRFVETQLLSNVISLLHTLWVTNLGNKAPEERSQPPGQVGSQESEKMLALHMVSEFLYVLIALTKHLRPTLASAQLMNFFWTLESVLSYRATIIKLFKDMGRFTVNKVALSTKDVLILLHKWSLIERDTKLQGELKAVIEQHQAKDLMKMLKDKSRPVVAAQARGPRGRKRRHGGLEETAEPQLEASCLEKCKDLLRATLTHWGPGDPLPGPTQGSVGQTIPKSKTLSSAHAAVSLVASWVLRSLAERPVSRAEVTRLLDWLKSHILPQPMVVADLLGDSAVKTGIFKLYNHHCSAQGLVGPAQDVACKFSTVMLQLLVAQGRKESPFHSVAEALCLDSLNEKEEAKRAPAAFLVSLYVKDMWLGAQQPDTFLAHIRMVCEAAKDVPLDEPEAIVVLCRNVDSSAQCLTRSR.

The disordered stretch occupies residues 1–23; the sequence is MGVPKRKASEGPSSAASPAGTVK. The span at 10 to 20 shows a compositional bias: low complexity; the sequence is EGPSSAASPAG. Residues Ser-17 and Ser-1141 each carry the phosphoserine modification. The segment at 2020-2042 is disordered; it reads VVAAQARGPRGRKRRHGGLEETA.

The protein resides in the nucleus. It localises to the nucleolus. The polypeptide is Nucleolar pre-ribosomal-associated protein 1 (Urb1) (Mus musculus (Mouse)).